A 472-amino-acid polypeptide reads, in one-letter code: Adenosylhomocysteinase (472 aa).

The substrate site is built by T62, D137, and E197. 198–200 (TTT) serves as a coordination point for NAD(+). Substrate is bound by residues K227 and D231. NAD(+) is bound by residues N232, 261–266 (GYGDVG), E284, N319, 340–342 (IGH), and N385.

The protein belongs to the adenosylhomocysteinase family. It depends on NAD(+) as a cofactor.

The protein resides in the cytoplasm. It catalyses the reaction S-adenosyl-L-homocysteine + H2O = L-homocysteine + adenosine. Its pathway is amino-acid biosynthesis; L-homocysteine biosynthesis; L-homocysteine from S-adenosyl-L-homocysteine: step 1/1. May play a key role in the regulation of the intracellular concentration of adenosylhomocysteine. The protein is Adenosylhomocysteinase of Bordetella pertussis (strain Tohama I / ATCC BAA-589 / NCTC 13251).